Consider the following 887-residue polypeptide: Bifunctional uridylyltransferase/uridylyl-removing enzyme (887 aa).

Residues 1–337 form a uridylyltransferase region; the sequence is MINTSPLLNY…RLPNYERKIE (337 aa). A uridylyl-removing region spans residues 339 to 699; the sequence is VNDHFKIVDN…AHRKAAQDAV (361 aa). In terms of domain architecture, HD spans 457-579; sequence VDAHTLLLLR…LGDMEHLDYL (123 aa). ACT domains are found at residues 700–782 and 809–887; these read QIFI…LMQR and MVEI…ICQH.

This sequence belongs to the GlnD family. It depends on Mg(2+) as a cofactor.

The catalysed reaction is [protein-PII]-L-tyrosine + UTP = [protein-PII]-uridylyl-L-tyrosine + diphosphate. The enzyme catalyses [protein-PII]-uridylyl-L-tyrosine + H2O = [protein-PII]-L-tyrosine + UMP + H(+). Uridylyltransferase (UTase) activity is inhibited by glutamine, while glutamine activates uridylyl-removing (UR) activity. Functionally, modifies, by uridylylation and deuridylylation, the PII regulatory proteins (GlnB and homologs), in response to the nitrogen status of the cell that GlnD senses through the glutamine level. Under low glutamine levels, catalyzes the conversion of the PII proteins and UTP to PII-UMP and PPi, while under higher glutamine levels, GlnD hydrolyzes PII-UMP to PII and UMP (deuridylylation). Thus, controls uridylylation state and activity of the PII proteins, and plays an important role in the regulation of nitrogen assimilation and metabolism. This Acinetobacter baumannii (strain ATCC 17978 / DSM 105126 / CIP 53.77 / LMG 1025 / NCDC KC755 / 5377) protein is Bifunctional uridylyltransferase/uridylyl-removing enzyme.